Consider the following 163-residue polypeptide: GPI-anchored protein LLG2 (163 aa).

The signal sequence occupies residues 1–23 (MEISPYCLLSLLPIFLLSGFSLS). A glycan (N-linked (GlcNAc...) asparagine) is linked at Asn52. Ser135 is lipidated: GPI-anchor amidated serine. Residues 136–163 (DSIPRASTTASLAVLSTFLVLCLLFLSS) constitute a propeptide, removed in mature form.

Expressed in pollen, pollen tubes, sporophytic pistil tissues, in the early stages of female gametophyte development, and in unfertilized, mature ovules.

The protein localises to the cell membrane. The protein is GPI-anchored protein LLG2 of Arabidopsis thaliana (Mouse-ear cress).